Consider the following 595-residue polypeptide: Neuroepithelial cell-transforming gene 1 protein (595 aa).

Met1 is modified (N-acetylmethionine). Residues 1–42 (MEPEPAAQKQPRPRRRSRRVSMLSEEPAAGLPADTPGPAANE) form a disordered region. Residues 1-74 (MEPEPAAQKQ…LKRKRREKDD (74 aa)) form a necessary for nuclear localization region. The short motif at 12–19 (RPRRRSRR) is the Nuclear localization signal element. At Ser21 the chain carries Phosphoserine. Positions 66–72 (KRKRREK) match the Nuclear localization signal motif. Residues Ser100, Ser106, and Ser122 each carry the phosphoserine modification. The segment at 127 to 151 (GDHRSPASAQKSFSRSTVPTPTKRR) is disordered. A compositionally biased stretch (polar residues) spans 133–146 (ASAQKSFSRSTVPT). The DH domain maps to 174–356 (KRQEAIYELS…QGVLSDINLK (183 aa)). In terms of domain architecture, PH spans 386–501 (VLLCHGELKN…WFNCIRAAIA (116 aa)). Ser508 bears the Phosphoserine mark. A disordered region spans residues 555 to 595 (CGSSVQTVEDTRNMKAQRPQPGLRRARDKAQSGGKKKETLV).

As to quaternary structure, interacts with RHOA in its GTP- and GDP-bound states, and with CDC42 in its GTP-bound state. Interacts with the PDZ 1 domain of BAIAP1.

The protein resides in the cytoplasm. It localises to the nucleus. In terms of biological role, acts as a guanine nucleotide exchange factor (GEF) for RhoA GTPase. May be involved in activation of the SAPK/JNK pathway. Stimulates genotoxic stress-induced RHOB activity in breast cancer cells leading to their cell death. The sequence is that of Neuroepithelial cell-transforming gene 1 protein (Net1) from Mus musculus (Mouse).